Reading from the N-terminus, the 265-residue chain is Sulfur carrier protein FdhD (265 aa).

C107 functions as the Cysteine persulfide intermediate in the catalytic mechanism.

It belongs to the FdhD family.

It is found in the cytoplasm. In terms of biological role, required for formate dehydrogenase (FDH) activity. Acts as a sulfur carrier protein that transfers sulfur from IscS to the molybdenum cofactor prior to its insertion into FDH. The sequence is that of Sulfur carrier protein FdhD from Staphylococcus aureus (strain JH9).